The primary structure comprises 341 residues: S-adenosylmethionine:tRNA ribosyltransferase-isomerase (341 aa).

The protein belongs to the QueA family. As to quaternary structure, monomer.

Its subcellular location is the cytoplasm. The catalysed reaction is 7-aminomethyl-7-carbaguanosine(34) in tRNA + S-adenosyl-L-methionine = epoxyqueuosine(34) in tRNA + adenine + L-methionine + 2 H(+). The protein operates within tRNA modification; tRNA-queuosine biosynthesis. Its function is as follows. Transfers and isomerizes the ribose moiety from AdoMet to the 7-aminomethyl group of 7-deazaguanine (preQ1-tRNA) to give epoxyqueuosine (oQ-tRNA). The protein is S-adenosylmethionine:tRNA ribosyltransferase-isomerase of Clostridium botulinum (strain ATCC 19397 / Type A).